Here is a 178-residue protein sequence, read N- to C-terminus: Germinal center-associated signaling and motility protein (178 aa).

Position 99 is a phosphoserine (Ser99). At Tyr148 the chain carries Phosphotyrosine.

In terms of assembly, interacts with ACTB and MYH2; the interaction with MYH2 is increased by IL6-induced phosphorylation. Interacts (via C-terminus) with ARHGEF11 (via DH domain). Interacts with ARHGEF12. Interacts with SYK; the interaction increases after B-cell receptor stimulation, resulting in enhanced SYK autophosphorylation and activity. Phosphorylation on tyrosine residues can be induced by IL6. Phosphorylation is mediated by LYN. Post-translationally, targeted by the ubiquitin E3 ligase subunit FBXO10 to mediate its ubiquitination and degradation. Expressed in diffuse large B-cell lymphoma (DLBCL) and several germinal center (GC)-like lymphoma cell lines (at protein level). Highly expressed in normal GC lymphocytes and GC-derived malignancies. Expressed in thymus and spleen.

The protein localises to the cytoplasm. Its subcellular location is the cell membrane. Involved in the negative regulation of lymphocyte motility. It mediates the migration-inhibitory effects of IL6. Serves as a positive regulator of the RhoA signaling pathway. Enhancement of RhoA activation results in inhibition of lymphocyte and lymphoma cell motility by activation of its downstream effector ROCK. Is a regulator of B-cell receptor signaling, that acts through SYK kinase activation. The protein is Germinal center-associated signaling and motility protein (GCSAM) of Homo sapiens (Human).